Here is a 1713-residue protein sequence, read N- to C-terminus: Cell wall protein AWA1 (1713 aa).

An N-terminal signal peptide occupies residues 1-23; sequence MFNRFNKLQAALALVLYSQSALG. A glycan (N-linked (GlcNAc...) asparagine) is linked at Asn34. Disordered regions lie at residues 80–117, 256–327, and 359–939; these read IAPS…SSSS, TSTT…AESI, and SSGI…STAS. The segment covering 256–275 has biased composition (low complexity); that stretch reads TSTTSDTYISSSSPSQVTSS. Composition is skewed to polar residues over residues 276–327 and 359–368; these read AEPT…AESI and SSGISSSVEP. Positions 374 to 939 are enriched in low complexity; the sequence is PSSDESISST…QSTSSASTAS (566 aa). N-linked (GlcNAc...) asparagine glycans are attached at residues Asn1133, Asn1241, and Asn1278. Residues 1582 to 1603 form a disordered region; the sequence is KTVTSEAPKETSETSETSAAPK. Ala1692 carries the GPI-anchor amidated alanine lipid modification. Residues 1693 to 1713 constitute a propeptide, removed in mature form; the sequence is AGLNANTLNALVGIFVLAFFN.

Belongs to the SRP1/TIP1 family. In terms of processing, the GPI-anchor is attached to the protein in the endoplasmic reticulum and serves to target the protein to the cell surface. There, the glucosamine-inositol phospholipid moiety is cleaved off and the GPI-modified mannoprotein is covalently attached via its lipidless GPI glycan remnant to the 1,6-beta-glucan of the outer cell wall layer.

It localises to the secreted. The protein localises to the cell wall. The protein resides in the membrane. Functionally, involved in cell wall organization and biosynthesis. Confers cell surface hydrophobicity (CSH). This chain is Cell wall protein AWA1 (AWA1), found in Saccharomyces cerevisiae (strain Kyokai no. 7 / NBRC 101557) (Baker's yeast).